The following is a 58-amino-acid chain: Small ribosomal subunit protein eS30 (58 aa).

Residues 1–58 are disordered; it reads MGKVHGSLARAGKVKNQTPKVPKLDKKKRLTGRAKKRQLYNRRFSDNGGRKKGPNSKA. A compositionally biased stretch (basic residues) spans 25 to 40; sequence DKKKRLTGRAKKRQLY.

Belongs to the eukaryotic ribosomal protein eS30 family. As to quaternary structure, component of the small ribosomal subunit. Mature ribosomes consist of a small (40S) and a large (60S) subunit. The 40S subunit contains about 32 different proteins and 1 molecule of RNA (18S). The 60S subunit contains about 42 different proteins and 3 molecules of RNA (28S, 5.8S and 5S).

The protein localises to the cytoplasm. Its function is as follows. Component of the ribosome, a large ribonucleoprotein complex responsible for the synthesis of proteins in the cell. The small ribosomal subunit (SSU) binds messenger RNAs (mRNAs) and translates the encoded message by selecting cognate aminoacyl-transfer RNA (tRNA) molecules. The large subunit (LSU) contains the ribosomal catalytic site termed the peptidyl transferase center (PTC), which catalyzes the formation of peptide bonds, thereby polymerizing the amino acids delivered by tRNAs into a polypeptide chain. The nascent polypeptides leave the ribosome through a tunnel in the LSU and interact with protein factors that function in enzymatic processing, targeting, and the membrane insertion of nascent chains at the exit of the ribosomal tunnel. This is Small ribosomal subunit protein eS30 from Plasmodium falciparum (isolate 3D7).